The following is a 116-amino-acid chain: Protein Rev (116 aa).

2 positions are modified to phosphoserine; by host CK2: Ser-5 and Ser-8. Positions 18 to 26 (LIKFLYQSN) are homomultimerization. The disordered stretch occupies residues 23–49 (YQSNPPPNPEGTRQARRNRRRRWRERQ). The Nuclear localization signal and RNA-binding (RRE) motif lies at 34–50 (TRQARRNRRRRWRERQR). A compositionally biased stretch (basic residues) spans 36–47 (QARRNRRRRWRE). A Nuclear export signal and binding to XPO1 motif is present at residues 73 to 84 (LQLPPLERLTLD). 2 positions are modified to phosphoserine; by host: Ser-92 and Ser-99.

Belongs to the HIV-1 REV protein family. Homomultimer; when bound to the RRE. Multimeric assembly is essential for activity and may involve XPO1. Binds to human KPNB1, XPO1, TNPO1, RANBP5 and IPO7. Interacts with the viral Integrase. Interacts with human KHDRBS1. Interacts with human NAP1; this interaction decreases Rev multimerization and stimulates its activity. Interacts with human DEAD-box helicases DDX3 and DDX24; these interactions may serve for viral RNA export to the cytoplasm and packaging, respectively. Interacts with human PSIP1; this interaction may inhibit HIV-1 DNA integration by promoting dissociation of the Integrase-LEDGF/p75 complex. Post-translationally, asymmetrically arginine dimethylated at one site by host PRMT6. Methylation impairs the RNA-binding activity and export of viral RNA from the nucleus to the cytoplasm. Phosphorylated by protein kinase CK2. Presence of, and maybe binding to the N-terminus of the regulatory beta subunit of CK2 is necessary for CK2-mediated Rev's phosphorylation.

The protein localises to the host nucleus. Its subcellular location is the host nucleolus. It is found in the host cytoplasm. Functionally, escorts unspliced or incompletely spliced viral pre-mRNAs (late transcripts) out of the nucleus of infected cells. These pre-mRNAs carry a recognition sequence called Rev responsive element (RRE) located in the env gene, that is not present in fully spliced viral mRNAs (early transcripts). This function is essential since most viral proteins are translated from unspliced or partially spliced pre-mRNAs which cannot exit the nucleus by the pathway used by fully processed cellular mRNAs. Rev itself is translated from a fully spliced mRNA that readily exits the nucleus. Rev's nuclear localization signal (NLS) binds directly to KPNB1/Importin beta-1 without previous binding to KPNA1/Importin alpha-1. KPNB1 binds to the GDP bound form of RAN (Ran-GDP) and targets Rev to the nucleus. In the nucleus, the conversion from Ran-GDP to Ran-GTP dissociates Rev from KPNB1 and allows Rev's binding to the RRE in viral pre-mRNAs. Rev multimerization on the RRE via cooperative assembly exposes its nuclear export signal (NES) to the surface. Rev can then form a complex with XPO1/CRM1 and Ran-GTP, leading to nuclear export of the complex. Conversion from Ran-GTP to Ran-GDP mediates dissociation of the Rev/RRE/XPO1/RAN complex, so that Rev can return to the nucleus for a subsequent round of export. Beside KPNB1, also seems to interact with TNPO1/Transportin-1, RANBP5/IPO5 and IPO7/RANBP7 for nuclear import. The nucleoporin-like HRB/RIP is an essential cofactor that probably indirectly interacts with Rev to release HIV RNAs from the perinuclear region to the cytoplasm. This chain is Protein Rev, found in Human immunodeficiency virus type 1 group M subtype B (isolate PCV12) (HIV-1).